The following is a 40-amino-acid chain: Photosystem II reaction center protein J (40 aa).

Residues 8–28 traverse the membrane as a helical segment; that stretch reads IPLWIIGTVAGILVIGLIGIF.

This sequence belongs to the PsbJ family. In terms of assembly, PSII is composed of 1 copy each of membrane proteins PsbA, PsbB, PsbC, PsbD, PsbE, PsbF, PsbH, PsbI, PsbJ, PsbK, PsbL, PsbM, PsbT, PsbX, PsbY, PsbZ, Psb30/Ycf12, at least 3 peripheral proteins of the oxygen-evolving complex and a large number of cofactors. It forms dimeric complexes.

It is found in the plastid. Its subcellular location is the chloroplast thylakoid membrane. In terms of biological role, one of the components of the core complex of photosystem II (PSII). PSII is a light-driven water:plastoquinone oxidoreductase that uses light energy to abstract electrons from H(2)O, generating O(2) and a proton gradient subsequently used for ATP formation. It consists of a core antenna complex that captures photons, and an electron transfer chain that converts photonic excitation into a charge separation. This chain is Photosystem II reaction center protein J, found in Nicotiana sylvestris (Wood tobacco).